We begin with the raw amino-acid sequence, 78 residues long: Large ribosomal subunit protein bL28 (78 aa).

Positions 1 to 20 (MSRVCQVTGKRPVTGNNRSH) are disordered.

It belongs to the bacterial ribosomal protein bL28 family.

In Vibrio campbellii (strain ATCC BAA-1116), this protein is Large ribosomal subunit protein bL28.